A 454-amino-acid chain; its full sequence is Transmembrane protease serine 3 (454 aa).

At 1 to 48 the chain is on the cytoplasmic side; sequence MGENDPPAVEAPFSFRSLFGLDDLKISPVAPDADAVAAQILSLLPLKF. The helical; Signal-anchor for type II membrane protein transmembrane segment at 49-69 threads the bilayer; sequence FPIIVIGIIALILALAIGLGI. Residues 70–454 are Extracellular-facing; sequence HFDCSGKYRC…HEQMERDLKT (385 aa). Positions 72–108 constitute an LDL-receptor class A domain; it reads DCSGKYRCRSSFKCIELIARCDGVSDCKDGEDEYRCV. 10 disulfides stabilise this stretch: cysteine 73/cysteine 85, cysteine 79/cysteine 98, cysteine 92/cysteine 107, cysteine 129/cysteine 194, cysteine 142/cysteine 204, cysteine 207/cysteine 324, cysteine 242/cysteine 258, cysteine 338/cysteine 407, cysteine 370/cysteine 386, and cysteine 397/cysteine 425. In terms of domain architecture, SRCR spans 109 to 205; that stretch reads RVGGQNAVLQ…SGHVVTLQCT (97 aa). Positions 217–449 constitute a Peptidase S1 domain; sequence IVGGNMSLLS…FLDWIHEQME (233 aa). The N-linked (GlcNAc...) asparagine glycan is linked to asparagine 221. Catalysis depends on charge relay system residues histidine 257 and aspartate 304. Serine 401 acts as the Charge relay system in catalysis.

The protein belongs to the peptidase S1 family. In terms of processing, undergoes autoproteolytic activation. Expressed in many tissues including fetal cochlea. Isoform T is found at increased levels in some carcinomas.

It localises to the endoplasmic reticulum membrane. Probable serine protease that plays a role in hearing. Acts as a permissive factor for cochlear hair cell survival and activation at the onset of hearing and is required for saccular hair cell survival. Activates ENaC (in vitro). The sequence is that of Transmembrane protease serine 3 (TMPRSS3) from Homo sapiens (Human).